The chain runs to 65 residues: Large ribosomal subunit protein bL28 (65 aa).

It belongs to the bacterial ribosomal protein bL28 family.

The polypeptide is Large ribosomal subunit protein bL28 (Lachnoclostridium phytofermentans (strain ATCC 700394 / DSM 18823 / ISDg) (Clostridium phytofermentans)).